The sequence spans 415 residues: UDP-N-acetylglucosamine 1-carboxyvinyltransferase 1 (415 aa).

23–24 (KN) contacts phosphoenolpyruvate. Arginine 92 is a UDP-N-acetyl-alpha-D-glucosamine binding site. Catalysis depends on cysteine 116, which acts as the Proton donor. Cysteine 116 is modified (2-(S-cysteinyl)pyruvic acid O-phosphothioketal). UDP-N-acetyl-alpha-D-glucosamine-binding positions include 121 to 125 (RPIDL), aspartate 304, and valine 326.

It belongs to the EPSP synthase family. MurA subfamily.

Its subcellular location is the cytoplasm. It carries out the reaction phosphoenolpyruvate + UDP-N-acetyl-alpha-D-glucosamine = UDP-N-acetyl-3-O-(1-carboxyvinyl)-alpha-D-glucosamine + phosphate. It participates in cell wall biogenesis; peptidoglycan biosynthesis. Cell wall formation. Adds enolpyruvyl to UDP-N-acetylglucosamine. The sequence is that of UDP-N-acetylglucosamine 1-carboxyvinyltransferase 1 from Caldanaerobacter subterraneus subsp. tengcongensis (strain DSM 15242 / JCM 11007 / NBRC 100824 / MB4) (Thermoanaerobacter tengcongensis).